A 107-amino-acid polypeptide reads, in one-letter code: Alpha-elapitoxin-Al2a (107 aa).

An N-terminal signal peptide occupies residues Met1 to Ser21. 5 disulfide bridges follow: Cys24/Cys41, Cys34/Cys62, Cys47/Cys51, Cys66/Cys77, and Cys78/Cys83.

Belongs to the three-finger toxin family. Long-chain subfamily. Type II alpha-neurotoxin sub-subfamily. Expressed by the venom gland.

The protein resides in the secreted. Binds with high affinity to muscular (alpha-1/CHRNA1) and neuronal (alpha-7/CHRNA7) nicotinic acetylcholine receptor (nAChR) and inhibits acetylcholine from binding to the receptor, thereby impairing neuromuscular and neuronal transmission. This chain is Alpha-elapitoxin-Al2a, found in Austrelaps labialis (Pygmy copperhead).